Consider the following 152-residue polypeptide: Transcriptional regulator MraZ (152 aa).

SpoVT-AbrB domains are found at residues 5–52 (ATLV…PLPE) and 81–124 (ASEC…DETT).

This sequence belongs to the MraZ family. In terms of assembly, dodecamer.

It is found in the cytoplasm. The protein resides in the nucleoid. Functionally, negatively regulates its own expression and that of the subsequent genes in the proximal part of the division and cell wall (dcw) gene cluster. Acts by binding directly to DNA. May also regulate the expression of genes outside the dcw cluster. The chain is Transcriptional regulator MraZ from Escherichia coli (strain K12).